The following is a 230-amino-acid chain: Large ribosomal subunit protein uL1 (230 aa).

It belongs to the universal ribosomal protein uL1 family. In terms of assembly, part of the 50S ribosomal subunit.

Binds directly to 23S rRNA. The L1 stalk is quite mobile in the ribosome, and is involved in E site tRNA release. Functionally, protein L1 is also a translational repressor protein, it controls the translation of the L11 operon by binding to its mRNA. In Lactobacillus gasseri (strain ATCC 33323 / DSM 20243 / BCRC 14619 / CIP 102991 / JCM 1131 / KCTC 3163 / NCIMB 11718 / NCTC 13722 / AM63), this protein is Large ribosomal subunit protein uL1.